A 131-amino-acid polypeptide reads, in one-letter code: UPF0134 protein MPN_010 (131 aa).

The protein belongs to the UPF0134 family.

The polypeptide is UPF0134 protein MPN_010 (Mycoplasma pneumoniae (strain ATCC 29342 / M129 / Subtype 1) (Mycoplasmoides pneumoniae)).